The primary structure comprises 471 residues: POU domain protein 2 (471 aa).

Residues 1-18 are compositionally biased toward acidic residues; sequence CGKSYEEEEEEEDDELEA. Disordered stretches follow at residues 1–32 and 149–238; these read CGKS…SARQ and DQQL…PKPL. The segment covering 165 to 180 has biased composition (low complexity); sequence STPLSKSPLRSPSLSP. Polar residues predominate over residues 186–196; it reads EPQQAQRTPPN. Low complexity predominate over residues 197–230; that stretch reads SLAAAGLGLSSAVLTPNTPSMQQQQQQTMTSTTN. In terms of domain architecture, POU-specific spans 257-331; that stretch reads EETTDLEELE…LLQKWLEDAD (75 aa). A DNA-binding region (homeobox) is located at residues 362–421; that stretch reads RRKKRTSIETTIRGALEQAFVLNCKPTSEEINQLSERLHMDKEVVRVWFCNRRQKEKRIN.

This sequence belongs to the POU transcription factor family. Class-2 subfamily.

It is found in the nucleus. Functionally, DNA-binding regulatory protein implicated in early development. Involved in neuronal cell fate decision. May act as an octamer-dependent activator of transcription. This Drosophila virilis (Fruit fly) protein is POU domain protein 2 (pdm2).